The following is a 239-amino-acid chain: Uridylate kinase (239 aa).

Position 10–13 (10–13 (KISG)) interacts with ATP. The tract at residues 18 to 23 (GESGYG) is involved in allosteric activation by GTP. A UMP-binding site is contributed by G52. 2 residues coordinate ATP: G53 and R57. Residues D72 and 133 to 140 (TGNPYFTT) each bind UMP. T160, Y166, and D169 together coordinate ATP.

Belongs to the UMP kinase family. In terms of assembly, homohexamer.

The protein localises to the cytoplasm. It catalyses the reaction UMP + ATP = UDP + ADP. It functions in the pathway pyrimidine metabolism; CTP biosynthesis via de novo pathway; UDP from UMP (UMPK route): step 1/1. Its activity is regulated as follows. Allosterically activated by GTP. Inhibited by UTP. In terms of biological role, catalyzes the reversible phosphorylation of UMP to UDP. This is Uridylate kinase from Chlorobaculum tepidum (strain ATCC 49652 / DSM 12025 / NBRC 103806 / TLS) (Chlorobium tepidum).